Here is a 209-residue protein sequence, read N- to C-terminus: Uridine kinase (209 aa).

Residue 12–19 participates in ATP binding; that stretch reads GGSGSGKT.

This sequence belongs to the uridine kinase family.

It localises to the cytoplasm. It carries out the reaction uridine + ATP = UMP + ADP + H(+). It catalyses the reaction cytidine + ATP = CMP + ADP + H(+). It functions in the pathway pyrimidine metabolism; CTP biosynthesis via salvage pathway; CTP from cytidine: step 1/3. Its pathway is pyrimidine metabolism; UMP biosynthesis via salvage pathway; UMP from uridine: step 1/1. This chain is Uridine kinase, found in Listeria innocua serovar 6a (strain ATCC BAA-680 / CLIP 11262).